The primary structure comprises 1124 residues: Zinc finger E-box-binding homeobox 1 (1124 aa).

Disordered stretches follow at residues 1–124 and 142–163; these read MADG…NHDP and APEE…NGTP. Residues 18–30 show a composition bias toward low complexity; the sequence is NNVTNYNTVVETN. Ser31 and Ser33 each carry phosphoserine. The span at 44–62 shows a compositional bias: acidic residues; that stretch reads EESVTDAADCEGVPEDDLP. The span at 72 to 91 shows a compositional bias: basic and acidic residues; sequence SSEREGNAKNCWEDDRKEGQ. A C2H2-type 1 zinc finger spans residues 170–193; the sequence is LTCPYCDRGYKRFTSLKEHIKYRH. Glycyl lysine isopeptide (Lys-Gly) (interchain with G-Cter in SUMO2) cross-links involve residues Lys186 and Lys195. C2H2-type zinc fingers lie at residues 200 to 222 and 240 to 262; these read FSCS…MTSH and FKCT…LRIH. The segment at 268 to 292 adopts a C2H2-type 4; atypical zinc-finger fold; that stretch reads YECPNCKKRFSHSGSYSSHISSKKC. The segment at 304-327 is disordered; the sequence is TGLKTSQCSSPSLSASPGSPTRPQ. Residue Lys307 forms a Glycyl lysine isopeptide (Lys-Gly) (interchain with G-Cter in SUMO2) linkage. Over residues 309-322 the composition is skewed to low complexity; the sequence is SQCSSPSLSASPGS. Phosphoserine occurs at positions 313 and 322. Glycyl lysine isopeptide (Lys-Gly) (interchain with G-Cter in SUMO2) cross-links involve residues Lys331 and Lys335. Lys347 is covalently cross-linked (Glycyl lysine isopeptide (Lys-Gly) (interchain with G-Cter in SUMO); alternate). Lys347 participates in a covalent cross-link: Glycyl lysine isopeptide (Lys-Gly) (interchain with G-Cter in SUMO2); alternate. Glycyl lysine isopeptide (Lys-Gly) (interchain with G-Cter in SUMO2) cross-links involve residues Lys439, Lys493, Lys504, Lys515, Lys548, and Lys553. Disordered regions lie at residues 551-586 and 636-714; these read DLKQ…SPSQ and QISV…SSSR. The segment at residues 581-640 is a DNA-binding region (homeobox; atypical); the sequence is NLSPSQPPLKNLLSLLKAYYALNAQPSAEELSKIADSVNLPLDVVKKWFEKMQAGQISVQ. 5 positions are modified to phosphoserine: Ser642, Ser679, Ser686, Ser693, and Ser700. Positions 656 to 687 are enriched in polar residues; it reads AKNNDQPQSANANEPQDSTVNLQSPLKMTNSP. Low complexity predominate over residues 692–714; the sequence is GSTTNGSRSSTPSPSPLNLSSSR. A Phosphothreonine modification is found at Thr702. Position 704 is a phosphoserine (Ser704). A Glycyl lysine isopeptide (Lys-Gly) (interchain with G-Cter in SUMO); alternate cross-link involves residue Lys774. Lys774 participates in a covalent cross-link: Glycyl lysine isopeptide (Lys-Gly) (interchain with G-Cter in SUMO2); alternate. The tract at residues 856–898 is disordered; that stretch reads PPLKVIQPNGNQDERQDTSSEGVSNVEDQNDSDSTPPKKKMRK. The span at 874-890 shows a compositional bias: polar residues; that stretch reads SSEGVSNVEDQNDSDST. 2 C2H2-type zinc fingers span residues 904 to 926 and 932 to 954; these read YACD…KYEH and HECG…MRLH. Residues 960 to 981 form a C2H2-type 7; atypical zinc finger; that stretch reads YQCDKCGKRFSHSGSYSQHMNH. The disordered stretch occupies residues 989–1124; it reads EAEERDSTEQ…QVSEEKTNEA (136 aa). Composition is skewed to acidic residues over residues 1031–1052 and 1062–1084; these read EEDE…ELQE and DEEE…ENEG. Residues 1085–1099 are compositionally biased toward basic and acidic residues; sequence EEAKTEGLMKDDRAE. Positions 1100-1115 are enriched in polar residues; sequence SQASSLGQKVGESSEQ.

Belongs to the delta-EF1/ZFH-1 C2H2-type zinc-finger family. Interacts (via N-terminus) with SMARCA4/BRG1. In terms of processing, ubiquitinated, leading to degradation in a proteasome-dependent manner. Deubiquitinated by USP51, leading to stabilization. As to expression, colocalizes with SMARCA4/BRG1 in E-cadherin-negative cells from established lines, and stroma of normal colon as well as in de-differentiated epithelial cells at the invasion front of colorectal carcinomas (at protein level). Expressed in heart and skeletal muscle, but not in liver, spleen, or pancreas.

The protein resides in the nucleus. Acts as a transcriptional repressor. Inhibits interleukin-2 (IL-2) gene expression. Enhances or represses the promoter activity of the ATP1A1 gene depending on the quantity of cDNA and on the cell type. Represses E-cadherin promoter and induces an epithelial-mesenchymal transition (EMT) by recruiting SMARCA4/BRG1. Represses BCL6 transcription in the presence of the corepressor CTBP1. Positively regulates neuronal differentiation. Represses RCOR1 transcription activation during neurogenesis. Represses transcription by binding to the E box (5'-CANNTG-3'). In the absence of TGFB1, acts as a repressor of COL1A2 transcription via binding to the E-box in the upstream enhancer region. The polypeptide is Zinc finger E-box-binding homeobox 1 (Homo sapiens (Human)).